We begin with the raw amino-acid sequence, 318 residues long: NAD kinase (318 aa).

Asp-84 serves as the catalytic Proton acceptor. NAD(+) contacts are provided by residues 84–85 (DG), Arg-89, 159–160 (NE), Arg-170, Asp-189, and 200–205 (TAYAFS).

This sequence belongs to the NAD kinase family. A divalent metal cation serves as cofactor.

It localises to the cytoplasm. It catalyses the reaction NAD(+) + ATP = ADP + NADP(+) + H(+). Its function is as follows. Involved in the regulation of the intracellular balance of NAD and NADP, and is a key enzyme in the biosynthesis of NADP. Catalyzes specifically the phosphorylation on 2'-hydroxyl of the adenosine moiety of NAD to yield NADP. This Cutibacterium acnes (strain DSM 16379 / KPA171202) (Propionibacterium acnes) protein is NAD kinase.